We begin with the raw amino-acid sequence, 215 residues long: Small ribosomal subunit protein uS3 (215 aa).

The region spanning 39-109 (IRKFIKKRLE…EVLVDVKEVK (71 aa)) is the KH type-2 domain.

This sequence belongs to the universal ribosomal protein uS3 family. As to quaternary structure, part of the 30S ribosomal subunit. Forms a tight complex with proteins S10 and S14.

Binds the lower part of the 30S subunit head. Binds mRNA in the 70S ribosome, positioning it for translation. This is Small ribosomal subunit protein uS3 from Methylacidiphilum infernorum (isolate V4) (Methylokorus infernorum (strain V4)).